The following is a 310-amino-acid chain: MPMQGAQRKLLGSLNSTPTATSNLGLAANRTGAPCLELPIPDGLFLSLGLVSLVENVLVVAAIAKNRNLHSSMYCFICCLALSDLLVSGSNMLEAGVLATRASVVQQLHNTIDVLTCSSMLCSLCFLGAIAVDRYISIFYALRYHSIMTLPRAQRAVAAIWVASVLSSTLFITYYDHAAVLLCLVVFFLAMLVLMAVLYVHMLAWACQHAQGIIRLHKRQPPAHKGFGLRGAATLTILLGIFFLCWGPFFLRLTLVVFCPQHLTCNCIFKNFKVFLTLIICNTIIDPLIYAFRSQELRRTLKEVLGRGRW.

Residues M1 to E37 are Extracellular-facing. N29 carries N-linked (GlcNAc...) asparagine glycosylation. A helical transmembrane segment spans residues L38 to I63. Topologically, residues A64–S72 are cytoplasmic. The helical transmembrane segment at M73–L93 threads the bilayer. Over E94–N110 the chain is Extracellular. Residues T111 to V132 form a helical membrane-spanning segment. The Cytoplasmic portion of the chain corresponds to D133–R155. Residues A156–Y175 traverse the membrane as a helical segment. Over D176–C183 the chain is Extracellular. Residues L184 to L203 traverse the membrane as a helical segment. At A204–A232 the chain is on the cytoplasmic side. A helical transmembrane segment spans residues A233–F258. The Extracellular portion of the chain corresponds to C259–N271. Residues F272–F292 form a helical membrane-spanning segment. Over R293–W310 the chain is Cytoplasmic.

The protein belongs to the G-protein coupled receptor 1 family. In terms of assembly, interacts with MGRN1, but does not undergo MGRN1-mediated ubiquitination; this interaction competes with GNAS-binding and thus inhibits agonist-induced cAMP production. Interacts with OPN3; the interaction results in a decrease in MC1R-mediated cAMP signaling and ultimately a decrease in melanin production in melanocytes.

Its subcellular location is the cell membrane. Receptor for MSH (alpha, beta and gamma) and ACTH. The activity of this receptor is mediated by G proteins which activate adenylate cyclase. Mediates melanogenesis, the production of eumelanin (black/brown) and phaeomelanin (red/yellow), via regulation of cAMP signaling in melanocytes. The chain is Melanocyte-stimulating hormone receptor (MC1R) from Leontopithecus chrysomelas (Golden-headed lion tamarin).